Consider the following 100-residue polypeptide: uncharacterized protein (100 aa).

Residues 65–91 (DDRERHLSATGERRREQGFGTSRRKDP) are compositionally biased toward basic and acidic residues. The segment at 65-100 (DDRERHLSATGERRREQGFGTSRRKDPSLYNWSDVK) is disordered.

Belongs to the chlamydial CPn_0121/CT_031/TC_0300 family.

This is an uncharacterized protein from Chlamydia trachomatis serovar D (strain ATCC VR-885 / DSM 19411 / UW-3/Cx).